We begin with the raw amino-acid sequence, 185 residues long: Large ribosomal subunit protein uL22 (185 aa).

The disordered stretch occupies residues Ala158–Glu185. Positions Lys167–Ala176 are enriched in basic residues.

This sequence belongs to the universal ribosomal protein uL22 family.

This chain is Large ribosomal subunit protein uL22 (RpL17), found in Diaphorina citri (Asian citrus psyllid).